The chain runs to 193 residues: Molybdenum cofactor guanylyltransferase (193 aa).

GTP is bound by residues 8–10, Lys21, Asp67, and Asp98; that span reads LAG. Position 98 (Asp98) interacts with Mg(2+).

The protein belongs to the MobA family. In terms of assembly, monomer. The cofactor is Mg(2+).

The protein localises to the cytoplasm. The catalysed reaction is Mo-molybdopterin + GTP + H(+) = Mo-molybdopterin guanine dinucleotide + diphosphate. Transfers a GMP moiety from GTP to Mo-molybdopterin (Mo-MPT) cofactor (Moco or molybdenum cofactor) to form Mo-molybdopterin guanine dinucleotide (Mo-MGD) cofactor. This is Molybdenum cofactor guanylyltransferase from Cereibacter sphaeroides (strain ATCC 17029 / ATH 2.4.9) (Rhodobacter sphaeroides).